The sequence spans 196 residues: MKVAKDLVVSLAYQVRTEDGVLVDESPVSAPLDYLHGHGSLISGLETALEGHEVGDKFDVAVGANDAYGQYDENLVQRVPKDVFMGVDELQVGMRFLAETDQGPVPVEITAVEDDHVVVDGNHMLAGQNLKFNVEVVAIREATEEELAHGHVHGAHDHHHDHDHDGCCGGHGHDHGHEHGGEGCCGGKGNGGCGCH.

Residues Met1 to Gly69 form a PPIase first part region. The region spanning Met1 to Arg95 is the PPIase FKBP-type domain. Residues Val76–Asp120 are IF-chaperone. The tract at residues Asn129–His151 is PPIase second part. Cys167, Cys168, Cys184, Cys185, Cys193, and Cys195 together coordinate Ni(2+).

Belongs to the FKBP-type PPIase family. Monomer. Binds to a broad range of unrelated Tat signal sequences. Interacts with the hydrogenase nickel incorporation protein HypB.

Its subcellular location is the cytoplasm. The catalysed reaction is [protein]-peptidylproline (omega=180) = [protein]-peptidylproline (omega=0). Folding helper with both chaperone and peptidyl-prolyl cis-trans isomerase (PPIase) activities. Chaperone activity prevents aggregation of unfolded or partially folded proteins and promotes their correct folding. PPIases catalyze the cis-trans isomerization of Xaa-Pro bonds of peptides, which accelerates slow steps of protein folding and thus shortens the lifetime of intermediates. Both strategies lower the concentration of intermediates and increase the productivity and yield of the folding reaction. SlyD could be involved in Tat-dependent translocation, by binding to the Tat-type signal of folded proteins. In terms of biological role, also involved in hydrogenase metallocenter assembly, probably by participating in the nickel insertion step. This function in hydrogenase biosynthesis requires chaperone activity and the presence of the metal-binding domain, but not PPIase activity. The protein is FKBP-type peptidyl-prolyl cis-trans isomerase SlyD (slyD) of Escherichia coli O157:H7.